The primary structure comprises 184 residues: Putative rRNA methyltransferase YlbH (184 aa).

The segment at 1 to 22 (MRVISGSKKGRSLKAVAGTSTR) is disordered.

This sequence belongs to the methyltransferase superfamily. RsmD family.

Functionally, may catalyze the S-adenosyl-L-methionine-dependent methylation of a specific base in rRNA. The polypeptide is Putative rRNA methyltransferase YlbH (ylbH) (Bacillus subtilis (strain 168)).